A 657-amino-acid chain; its full sequence is Translation factor GUF1, mitochondrial (657 aa).

Residues 1–39 constitute a mitochondrion transit peptide; sequence MRGCLQSVKWLTSALRPSQSLASSTRYPRRLLSTSAPRN. The 181-residue stretch at 59-239 folds into the tr-type G domain; that stretch reads ERFRNFCIVA…TVIEQIPAPV (181 aa). GTP contacts are provided by residues 109–116, 173–177, and 227–230; these read TVKAQTCS, LAFAE, and LLPT.

The protein belongs to the TRAFAC class translation factor GTPase superfamily. Classic translation factor GTPase family. LepA subfamily.

Its subcellular location is the mitochondrion inner membrane. It catalyses the reaction GTP + H2O = GDP + phosphate + H(+). Its function is as follows. Promotes mitochondrial protein synthesis. May act as a fidelity factor of the translation reaction, by catalyzing a one-codon backward translocation of tRNAs on improperly translocated ribosomes. Binds to mitochondrial ribosomes in a GTP-dependent manner. This is Translation factor GUF1, mitochondrial from Ajellomyces capsulatus (strain NAm1 / WU24) (Darling's disease fungus).